Here is a 238-residue protein sequence, read N- to C-terminus: LexA repressor (238 aa).

Residues 26 to 46 (FDEMKDALDLRSKSGIHRLIT) constitute a DNA-binding region (H-T-H motif). Active-site for autocatalytic cleavage activity residues include Ser-159 and Lys-197.

Belongs to the peptidase S24 family. Homodimer.

It carries out the reaction Hydrolysis of Ala-|-Gly bond in repressor LexA.. In terms of biological role, represses a number of genes involved in the response to DNA damage (SOS response), including recA and lexA. In the presence of single-stranded DNA, RecA interacts with LexA causing an autocatalytic cleavage which disrupts the DNA-binding part of LexA, leading to derepression of the SOS regulon and eventually DNA repair. The sequence is that of LexA repressor from Rhodobacter capsulatus (Rhodopseudomonas capsulata).